The chain runs to 233 residues: Small ribosomal subunit protein uS2c (233 aa).

The protein belongs to the universal ribosomal protein uS2 family.

It is found in the plastid. It localises to the apicoplast. The protein is Small ribosomal subunit protein uS2c of Toxoplasma gondii.